Reading from the N-terminus, the 620-residue chain is Threonine--tRNA ligase (620 aa).

The TGS domain occupies Met-1–Asp-42. The segment at Asp-224–Pro-515 is catalytic. The Zn(2+) site is built by Cys-315, His-366, and His-492.

The protein belongs to the class-II aminoacyl-tRNA synthetase family. Homodimer. It depends on Zn(2+) as a cofactor.

It is found in the cytoplasm. It catalyses the reaction tRNA(Thr) + L-threonine + ATP = L-threonyl-tRNA(Thr) + AMP + diphosphate + H(+). Catalyzes the attachment of threonine to tRNA(Thr) in a two-step reaction: L-threonine is first activated by ATP to form Thr-AMP and then transferred to the acceptor end of tRNA(Thr). Also edits incorrectly charged L-seryl-tRNA(Thr). This is Threonine--tRNA ligase from Fusobacterium nucleatum subsp. nucleatum (strain ATCC 25586 / DSM 15643 / BCRC 10681 / CIP 101130 / JCM 8532 / KCTC 2640 / LMG 13131 / VPI 4355).